Here is an 862-residue protein sequence, read N- to C-terminus: Molybdenum cofactor sulfurase (862 aa).

At Ser-34 the chain carries Phosphoserine. Position 264 is an N6-(pyridoxal phosphate)lysine (Lys-264). Cys-424 is a catalytic residue. Ser-517 bears the Phosphoserine mark. The 152-residue stretch at 704-855 (RKTPKKGQPP…LSVGSEVLPV (152 aa)) folds into the MOSC domain.

Belongs to the class-V pyridoxal-phosphate-dependent aminotransferase family. MOCOS subfamily. The cofactor is pyridoxal 5'-phosphate.

It catalyses the reaction Mo-molybdopterin + L-cysteine + AH2 = thio-Mo-molybdopterin + L-alanine + A + H2O. It participates in cofactor biosynthesis; molybdopterin biosynthesis. Functionally, sulfurates the molybdenum cofactor. Sulfation of molybdenum is essential for xanthine dehydrogenase (XDH) and aldehyde oxidase (ADO) enzymes in which molybdenum cofactor is liganded by 1 oxygen and 1 sulfur atom in active form. In Mus musculus (Mouse), this protein is Molybdenum cofactor sulfurase (Mocos).